The following is an 88-amino-acid chain: Small ribosomal subunit protein uS17 (88 aa).

The protein belongs to the universal ribosomal protein uS17 family. In terms of assembly, part of the 30S ribosomal subunit.

In terms of biological role, one of the primary rRNA binding proteins, it binds specifically to the 5'-end of 16S ribosomal RNA. This Synechococcus sp. (strain CC9311) protein is Small ribosomal subunit protein uS17.